The chain runs to 472 residues: Alkaline phosphatase (472 aa).

An N-terminal signal peptide occupies residues 1–21 (MKQSAIALALLSCLITPVSQA). D74 contacts Mg(2+). D74 contributes to the Zn(2+) binding site. The active-site Phosphoserine intermediate is the S125. Positions 176 and 178 each coordinate Mg(2+). Intrachain disulfides connect C191–C201 and C309–C359. Residue E345 participates in Mg(2+) binding. 5 residues coordinate Zn(2+): D350, H354, D392, H393, and H435.

Belongs to the alkaline phosphatase family. Homodimer. Mg(2+) serves as cofactor. It depends on Zn(2+) as a cofactor.

It is found in the periplasm. The enzyme catalyses a phosphate monoester + H2O = an alcohol + phosphate. The polypeptide is Alkaline phosphatase (phoA) (Escherichia fergusonii (strain ATCC 35469 / DSM 13698 / CCUG 18766 / IAM 14443 / JCM 21226 / LMG 7866 / NBRC 102419 / NCTC 12128 / CDC 0568-73)).